The chain runs to 124 residues: Replication restart protein PriB (124 aa).

Positions 12–112 (IDNCLTLTGI…LHTEQIEFID (101 aa)) constitute an SSB domain.

Belongs to the PriB family. Homodimer. Interacts with PriA and DnaT. Component of the replication restart primosome. Primosome assembly occurs via a 'hand-off' mechanism. PriA binds to replication forks, subsequently PriB then DnaT bind; DnaT then displaces ssDNA to generate the helicase loading substrate.

Involved in the restart of stalled replication forks, which reloads the replicative helicase on sites other than the origin of replication; the PriA-PriB pathway is the major replication restart pathway. During primosome assembly it facilitates complex formation between PriA and DnaT on DNA; stabilizes PriA on DNA. Stimulates the DNA unwinding activity of PriA helicase. This chain is Replication restart protein PriB, found in Haemophilus ducreyi (strain 35000HP / ATCC 700724).